A 471-amino-acid polypeptide reads, in one-letter code: 3-hydroxylaminophenol mutase (471 aa).

Residues 15–100 form the GS beta-grasp domain; that stretch reads NDVKFVDFRF…TCDVVEPSDG (86 aa). One can recognise a GS catalytic domain in the interval 107–471; sequence PRSIAKRAEA…PVEFEMYYSL (365 aa).

Belongs to the glutamine synthetase family.

It catalyses the reaction 3-hydroxyaminophenol = aminohydroquinone. With respect to regulation, is inhibited by H(2)O(2). 1,10-phenanthroline inhibits the activity slightly, but other metal cation chelators such as EDTA or tiron have no effect on the activity. Divalent metal cations and hydroxylamine have also no effect on the activity. Due to the relationship of the protein with glutamine synthetases, glutamate and glutamine were tested as inhibitors; neither preincubation of the compounds with the enzyme nor their addition to the assay buffer affected 3HAP mutase activity. Functionally, catalyzes the isomerization of 3-hydroxylaminophenol (3HAP) to aminohydroquinone, a step in the degradative pathway of 3-nitrophenol. The enzymatic reaction is regiospecific since it leads to the formation of aminohydroquinone exclusively, without producing the isomeric 4-aminocatechol. Can also isomerize other hydroxylaminoaromatic compounds, such as hydroxylaminobenzene to a mixture of 2-aminophenol and 4-aminophenol, 4-hydroxylaminotoluene to 6-amino-m-cresol, and 2-chloro-5-hydroxylaminophenol to 2-amino-5-chlorohydroquinone. Does not act on 4-hydroxylaminobenzoate. The protein is 3-hydroxylaminophenol mutase of Cupriavidus pinatubonensis (strain JMP 134 / LMG 1197) (Cupriavidus necator (strain JMP 134)).